The sequence spans 245 residues: Orotidine 5'-phosphate decarboxylase (245 aa).

Substrate-binding positions include Asp-22, Lys-44, 71–80 (DLKFHDIPNT), Thr-131, Arg-192, Gln-201, Gly-221, and Arg-222. Lys-73 (proton donor) is an active-site residue.

This sequence belongs to the OMP decarboxylase family. Type 1 subfamily. Homodimer.

The catalysed reaction is orotidine 5'-phosphate + H(+) = UMP + CO2. Its pathway is pyrimidine metabolism; UMP biosynthesis via de novo pathway; UMP from orotate: step 2/2. In terms of biological role, catalyzes the decarboxylation of orotidine 5'-monophosphate (OMP) to uridine 5'-monophosphate (UMP). The chain is Orotidine 5'-phosphate decarboxylase from Shigella flexneri serotype 5b (strain 8401).